Reading from the N-terminus, the 134-residue chain is FK506-binding protein 2 (134 aa).

An N-terminal signal peptide occupies residues 1–19 (MRFSIFSTLLVSLATLSTA). The 89-residue stretch at 39 to 127 (GDTVQMHYKG…IFETELVGID (89 aa)) folds into the PPIase FKBP-type domain. Positions 131–134 (KDEL) match the Prevents secretion from ER motif.

This sequence belongs to the FKBP-type PPIase family. FKBP2 subfamily.

The protein resides in the endoplasmic reticulum. It carries out the reaction [protein]-peptidylproline (omega=180) = [protein]-peptidylproline (omega=0). Its activity is regulated as follows. Inhibited by both FK506 and rapamycin. Functionally, PPIases accelerate the folding of proteins. It catalyzes the cis-trans isomerization of proline imidic peptide bonds in oligopeptides. This chain is FK506-binding protein 2 (fpr2), found in Aspergillus oryzae (strain ATCC 42149 / RIB 40) (Yellow koji mold).